The following is a 101-amino-acid chain: MFENMDFSKMGELLTKAQEKANELEQEALKKEFSAKSGGGLVKVSANGKGEIIDINIDDSLLEDKESMQILLIAAINDVMKMVEQNKKSMASNLFSGMGVL.

The protein belongs to the YbaB/EbfC family. As to quaternary structure, homodimer.

Its subcellular location is the cytoplasm. It is found in the nucleoid. Functionally, binds to DNA and alters its conformation. May be involved in regulation of gene expression, nucleoid organization and DNA protection. The sequence is that of Nucleoid-associated protein Cla_0113 from Campylobacter lari (strain RM2100 / D67 / ATCC BAA-1060).